Reading from the N-terminus, the 192-residue chain is uncharacterized protein (192 aa).

Residues 29 to 160 (RRQAAVLIPV…PLDIYRRGDS (132 aa)) enclose the Nudix hydrolase domain. Positions 67–89 (GAVDSSDASLIAAALREAQEEVA) match the Nudix box motif. Mg(2+) contacts are provided by E83 and E87.

It belongs to the Nudix hydrolase family. PCD1 subfamily. Requires Mn(2+) as cofactor. It depends on Mg(2+) as a cofactor.

Its function is as follows. Probably mediates the hydrolysis of some nucleoside diphosphate derivatives. This is an uncharacterized protein from Citrobacter koseri (strain ATCC BAA-895 / CDC 4225-83 / SGSC4696).